The chain runs to 390 residues: Homoserine O-succinyltransferase (390 aa).

The AB hydrolase-1 domain occupies Asn-59–Asp-369. Residue Ser-165 is the Nucleophile of the active site. Residue Arg-235 participates in substrate binding. Active-site residues include Asp-330 and His-363. Asp-364 is a substrate binding site.

It belongs to the AB hydrolase superfamily. MetX family. In terms of assembly, homodimer.

It is found in the cytoplasm. The catalysed reaction is L-homoserine + succinyl-CoA = O-succinyl-L-homoserine + CoA. Its pathway is amino-acid biosynthesis; L-methionine biosynthesis via de novo pathway; O-succinyl-L-homoserine from L-homoserine: step 1/1. Functionally, transfers a succinyl group from succinyl-CoA to L-homoserine, forming succinyl-L-homoserine. The polypeptide is Homoserine O-succinyltransferase (Cupriavidus metallidurans (strain ATCC 43123 / DSM 2839 / NBRC 102507 / CH34) (Ralstonia metallidurans)).